Reading from the N-terminus, the 690-residue chain is Eukaryotic translation initiation factor 3 subunit B (690 aa).

Positions 1 to 11 (MAKKKSEDHSG) are enriched in basic and acidic residues. The disordered stretch occupies residues 1 to 37 (MAKKKSEDHSGGDANDSDYNEEPNFEDPPNFVDNISD). Residues 15–25 (NDSDYNEEPNF) show a composition bias toward acidic residues. In terms of domain architecture, RRM spans 57-141 (SVVVVDNIPK…HTFAVNLFTD (85 aa)). WD repeat units follow at residues 207-246 (TRER…KIQK), 247-289 (FPHT…EKRS), 293-331 (DGMS…LLDL), 334-369 (IKIP…TLME), 442-484 (EIRE…KPSL), and 530-575 (PDHF…IKRT). A coiled-coil region spans residues 614–645 (QKDRLRLTRASKELLEKRSQLRETFMEYRNKR).

The protein belongs to the eIF-3 subunit B family. In terms of assembly, component of the eukaryotic translation initiation factor 3 (eIF-3) complex. The eIF-3 complex interacts with pix. Interacts with mxt.

The protein localises to the cytoplasm. RNA-binding component of the eukaryotic translation initiation factor 3 (eIF-3) complex, which is involved in protein synthesis of a specialized repertoire of mRNAs and, together with other initiation factors, stimulates binding of mRNA and methionyl-tRNAi to the 40S ribosome. The eIF-3 complex specifically targets and initiates translation of a subset of mRNAs involved in cell proliferation. This chain is Eukaryotic translation initiation factor 3 subunit B, found in Drosophila pseudoobscura pseudoobscura (Fruit fly).